Consider the following 202-residue polypeptide: Neurensin-2 (202 aa).

The next 2 helical transmembrane spans lie at 65-85 (VAVASLFLLLGVAALTTGYAV) and 116-136 (VVGATLCGVAGIMLAVCLFLI). The segment at 162-202 (RDEPEKLSPAFHETSSQSPFLTPPSPFGQQSVQTSQPQRDL) is disordered. The span at 188-202 (FGQQSVQTSQPQRDL) shows a compositional bias: polar residues.

This sequence belongs to the VMP family. In terms of tissue distribution, expressed specifically in brain where it is widely expressed, with highest levels of expression in thalamus and hypothalamus. In brain, found in neural cell bodies and detected in many regions of the limbic system, such as the septum nucleus, horizontal and vertical limbs of the diagonal band, hippocampus, amygdaloid nucleus, and habernula nucleus. Also localizes to small vesicles found in the perinuclear region of Neuro2a and PC12 cells.

The protein localises to the membrane. May play a role in maintenance and/or transport of vesicles. The sequence is that of Neurensin-2 from Mus musculus (Mouse).